Consider the following 264-residue polypeptide: Indole-3-glycerol phosphate synthase (264 aa).

It belongs to the TrpC family.

It catalyses the reaction 1-(2-carboxyphenylamino)-1-deoxy-D-ribulose 5-phosphate + H(+) = (1S,2R)-1-C-(indol-3-yl)glycerol 3-phosphate + CO2 + H2O. Its pathway is amino-acid biosynthesis; L-tryptophan biosynthesis; L-tryptophan from chorismate: step 4/5. In Xylella fastidiosa (strain 9a5c), this protein is Indole-3-glycerol phosphate synthase.